A 278-amino-acid polypeptide reads, in one-letter code: MSVPTAAKRITTRQLRMRTPDEPIVALTAYTAPIAGLLDAHCDLLLVGDSLGMVIYGMETTLPVTVDMMIQHGRAVMRGSQRACVAVDMPFGSYQEDERQAYRNAARIMAETGASCVKLEGGAEMASTVAFLVERGIPVMGHVGLKPQSVHGHGGFRTVGRGAEAEQVMADAQAIAAAGAFTVVIEGTLEPVARAITEALPVPTIGIGASPACGGQILVSDDVLGLFSDFTPRFVKRYAQLGPIIEQAAAAYASEVRARTFPAPEHCTGMPAPDGRPA.

Mg(2+)-binding residues include Asp-49 and Asp-88. 3-methyl-2-oxobutanoate-binding positions include 49-50, Asp-88, and Lys-118; that span reads DS. Glu-120 provides a ligand contact to Mg(2+). Glu-186 serves as the catalytic Proton acceptor.

Belongs to the PanB family. In terms of assembly, homodecamer; pentamer of dimers. The cofactor is Mg(2+).

The protein localises to the cytoplasm. It catalyses the reaction 3-methyl-2-oxobutanoate + (6R)-5,10-methylene-5,6,7,8-tetrahydrofolate + H2O = 2-dehydropantoate + (6S)-5,6,7,8-tetrahydrofolate. It functions in the pathway cofactor biosynthesis; (R)-pantothenate biosynthesis; (R)-pantoate from 3-methyl-2-oxobutanoate: step 1/2. Its function is as follows. Catalyzes the reversible reaction in which hydroxymethyl group from 5,10-methylenetetrahydrofolate is transferred onto alpha-ketoisovalerate to form ketopantoate. The protein is 3-methyl-2-oxobutanoate hydroxymethyltransferase of Bordetella parapertussis (strain 12822 / ATCC BAA-587 / NCTC 13253).